We begin with the raw amino-acid sequence, 273 residues long: ABC transporter glutamine-binding protein GlnH (273 aa).

The N-terminal stretch at 1–20 (MKKIFSLALISLFAVILLAA) is a signal peptide. The N-palmitoyl cysteine moiety is linked to residue Cys21. Residue Cys21 is the site of S-diacylglycerol cysteine attachment.

Belongs to the bacterial solute-binding protein 3 family. The complex is composed of two ATP-binding proteins (GlnQ), two transmembrane proteins (GlnM and GlnP) and a solute-binding protein (GlnH).

The protein localises to the cell membrane. In terms of biological role, part of the ABC transporter complex GlnHMPQ involved in glutamine transport. This is ABC transporter glutamine-binding protein GlnH (glnH) from Bacillus subtilis (strain 168).